Here is a 421-residue protein sequence, read N- to C-terminus: Gamma-glutamyl phosphate reductase (421 aa).

It belongs to the gamma-glutamyl phosphate reductase family.

Its subcellular location is the cytoplasm. The enzyme catalyses L-glutamate 5-semialdehyde + phosphate + NADP(+) = L-glutamyl 5-phosphate + NADPH + H(+). The protein operates within amino-acid biosynthesis; L-proline biosynthesis; L-glutamate 5-semialdehyde from L-glutamate: step 2/2. Catalyzes the NADPH-dependent reduction of L-glutamate 5-phosphate into L-glutamate 5-semialdehyde and phosphate. The product spontaneously undergoes cyclization to form 1-pyrroline-5-carboxylate. This Leptospira biflexa serovar Patoc (strain Patoc 1 / ATCC 23582 / Paris) protein is Gamma-glutamyl phosphate reductase.